The sequence spans 149 residues: NADH-quinone oxidoreductase subunit I 1 (149 aa).

2 consecutive 4Fe-4S ferredoxin-type domains span residues 51–82 (LKSFADTGTHKCIACGTCERMCPSNVIKVQGT) and 93–122 (THYVIDFTRCSLCGICVESCPTGTLQYSTE). Residues C62, C65, C68, C72, C102, C105, C108, and C112 each contribute to the [4Fe-4S] cluster site.

This sequence belongs to the complex I 23 kDa subunit family. As to quaternary structure, NDH-1 is composed of 14 different subunits. Subunits NuoA, H, J, K, L, M, N constitute the membrane sector of the complex. The cofactor is [4Fe-4S] cluster.

It localises to the cell inner membrane. It carries out the reaction a quinone + NADH + 5 H(+)(in) = a quinol + NAD(+) + 4 H(+)(out). In terms of biological role, NDH-1 shuttles electrons from NADH, via FMN and iron-sulfur (Fe-S) centers, to quinones in the respiratory chain. The immediate electron acceptor for the enzyme in this species is believed to be ubiquinone. Couples the redox reaction to proton translocation (for every two electrons transferred, four hydrogen ions are translocated across the cytoplasmic membrane), and thus conserves the redox energy in a proton gradient. The sequence is that of NADH-quinone oxidoreductase subunit I 1 from Syntrophobacter fumaroxidans (strain DSM 10017 / MPOB).